The chain runs to 538 residues: Prickle planar cell polarity protein 3-A (538 aa).

One can recognise a PET domain in the interval 66–175; it reads SGSQRDSLCE…CVRPVSGTMS (110 aa). 3 consecutive LIM zinc-binding domains span residues 177 to 241, 242 to 302, and 305 to 366; these read TVCQ…ELKR, PRCL…LYAQ, and DSCG…NATP. Polar residues predominate over residues 369–378; it reads SFSPSQTDLS. 3 disordered regions span residues 369-398, 433-463, and 475-538; these read SFSP…DGDS, RGAP…TRVT, and SVSL…CLLS. A compositionally biased stretch (basic and acidic residues) spans 435-449; sequence APKEFSRECPNRRSL. Residues 451–463 are compositionally biased toward polar residues; the sequence is DLNSHTRTPTRVT. 2 stretches are compositionally biased toward low complexity: residues 475 to 488 and 514 to 523; these read SVSL…SSSS and APPTHAPTST.

This sequence belongs to the prickle / espinas / testin family. Interacts with vangl2 via its C-terminus. The vangl2-dependent membrane recruitment of prickle3 is a prerequisite for its polarization. Interacts with wtip. Wtip is involved in the recruitment of prickle3 to the basal body. In terms of tissue distribution, predominantly expressed in the epidermal ectoderm.

Its subcellular location is the cytoplasm. The protein resides in the cell membrane. The protein localises to the mitochondrion. Its function is as follows. Involved in the planar cell polarity (PCP) pathway that is essential for the polarization of epithelial cells during morphogenetic processes, including gastrulation and neurulation. PCP is maintained by two molecular modules, the global and the core modules. Proteins of the core module include the proteins Frizzled (Fz), Disheveled (Dsh), Van Gogh (Vang), Prickle (Pk), Flamingo (Fmi, Celsr) and Diego (Dgo). The core module proteins develop subcellular asymmetry, accumulating in two groups on opposite sides of epithelial cells. Distinct proximal (Vang, Pk and Fmi) and distal (Fz, Dsh, Dgo and Fmi) complexes segregate to opposite sides of the cell, where they interact with the opposite complex in the neighboring cell at or near the adherents junctions. Directional information to orient polarization with respect to the tissue axes is provided by the global module which involves Wnt proteins. Involved in the organization of the basal body. Involved in cilia growth and positioning. Required for proper assembly, stability, and function of mitochondrial membrane ATP synthase (mitochondrial complex V). This is Prickle planar cell polarity protein 3-A (prickle3-a) from Xenopus laevis (African clawed frog).